A 159-amino-acid polypeptide reads, in one-letter code: Large ribosomal subunit protein uL15 (159 aa).

Residues 21 to 34 are compositionally biased toward basic residues; the sequence is LRPAPGAHKSKIRV. The segment at 21–55 is disordered; that stretch reads LRPAPGAHKSKIRVGRGEGSKGKTAGRGTKGSKAR.

It belongs to the universal ribosomal protein uL15 family. As to quaternary structure, part of the 50S ribosomal subunit.

Binds to the 23S rRNA. This is Large ribosomal subunit protein uL15 from Frankia casuarinae (strain DSM 45818 / CECT 9043 / HFP020203 / CcI3).